The chain runs to 74 residues: U4-theraphotoxin-Cg1a (74 aa).

An N-terminal signal peptide occupies residues 1 to 19 (MNATIFALLLLLNLAMYNA). Positions 20–39 (AEQSSETDMDDTLLIPEINR) are excised as a propeptide. 3 disulfides stabilise this stretch: Cys42-Cys56, Cys49-Cys61, and Cys55-Cys71.

It belongs to the neurotoxin 36 family. 01 subfamily. As to expression, expressed by the venom gland.

The protein localises to the secreted. Functionally, probable ion channel inhibitor. The polypeptide is U4-theraphotoxin-Cg1a (Chilobrachys guangxiensis (Chinese earth tiger tarantula)).